A 412-amino-acid chain; its full sequence is FAD-dependent monooxygenase nscC (412 aa).

The first 21 residues, 1–21, serve as a signal peptide directing secretion; the sequence is MGKQQETILIIGAGISGLATS. Residues Glu35 and Ala46 each contribute to the FAD site. Residue Asn92 is glycosylated (N-linked (GlcNAc...) asparagine). Arg119 contributes to the FAD binding site. Asn170 and Asn231 each carry an N-linked (GlcNAc...) asparagine glycan. FAD contacts are provided by Asp326 and Gly339.

It belongs to the paxM FAD-dependent monooxygenase family. FAD is required as a cofactor.

Its pathway is secondary metabolite biosynthesis. FAD-dependent monooxygenase; part of the gene cluster that mediates the biosynthesis of neosartoricin B, a prenylated anthracenone that probably exhibits T-cell antiproliferative activity, suggestive of a physiological role as an immunosuppressive agent. The non-reducing polyketide synthase nscA probably synthesizes and cyclizes the decaketide backbone. The hydrolase nscB then mediates the product release through hydrolysis followed by spontaneous decarboxylation. The prenyltransferase nscD catalyzes the addition of the dimethylallyl group to the aromatic C5. The FAD-dependent monooxygenase nscC is then responsible for the stereospecific hydroxylation at C2. Neosartoricin B can be converted into two additional compounds neosartoricins C and D. Neosartoricin C is a spirocyclic compound that is cyclized through the attack of C3 hydroxyl on C14, followed by dehydration. On the other hand, neosartoricin D is a further cyclized compound in which attack of C2 on C14 in neosartoricin C results in the formation of the acetal-containing dioxabicyclo-octanone ring. Both of these compounds are novel and possibly represent related metabolites of the gene cluster. The protein is FAD-dependent monooxygenase nscC of Trichophyton tonsurans (strain CBS 112818) (Scalp ringworm fungus).